The following is a 358-amino-acid chain: Aromatic amino acid aminotransferase (358 aa).

Position 214 is an N6-(pyridoxal phosphate)lysine (lysine 214).

It belongs to the class-II pyridoxal-phosphate-dependent aminotransferase family. Homodimer. Pyridoxal 5'-phosphate is required as a cofactor.

The enzyme catalyses an aromatic L-alpha-amino acid + 2-oxoglutarate = an aromatic oxo-acid + L-glutamate. Functionally, aminotransferase that catalyzes the conversion of aromatic amino acids and 2-oxoglutarate into corresponding aromatic oxo acids and L-glutamate. This Rhodococcus opacus (strain B4) protein is Aromatic amino acid aminotransferase.